A 60-amino-acid chain; its full sequence is Cytotoxin 5 (60 aa).

4 disulfides stabilise this stretch: cysteine 3–cysteine 21, cysteine 14–cysteine 38, cysteine 42–cysteine 53, and cysteine 54–cysteine 59.

This sequence belongs to the three-finger toxin family. Short-chain subfamily. Type IA cytotoxin sub-subfamily. As to quaternary structure, monomer in solution; Homodimer and oligomer in the presence of negatively charged lipids forming a pore with a size ranging between 20 and 30 Angstroms. In terms of tissue distribution, expressed by the venom gland.

The protein localises to the secreted. It localises to the target cell membrane. In terms of biological role, shows cytolytic activity on many different cells by forming pore in lipid membranes. In vivo, increases heart rate or kills the animal by cardiac arrest. In addition, it binds to heparin with high affinity, interacts with Kv channel-interacting protein 1 (KCNIP1) in a calcium-independent manner, and binds to integrin alpha-V/beta-3 (ITGAV/ITGB3) with moderate affinity. This chain is Cytotoxin 5, found in Naja mossambica (Mozambique spitting cobra).